The following is a 173-amino-acid chain: MPMKGRFPIRRTLQYLSQGNVVFKDSVKVMTVNYNTHGELGEGARKFVFFNIPQIQYKNPWVQIMMFKNMTPSPFLRFYLDSGEQVLVDVETKSNKEIMEHIRKILGKNEETLREEEEEKKQLSHPANFGPRKYCLRECICEVEGQVPCPSLVPLPKEMRGKYKAALKADAQD.

Belongs to the mitochondrion-specific ribosomal protein mS25 family. Component of the mitochondrial small ribosomal subunit (mt-SSU). Mature mammalian 55S mitochondrial ribosomes consist of a small (28S) and a large (39S) subunit. The 28S small subunit contains a 12S ribosomal RNA (12S mt-rRNA) and 30 different proteins. The 39S large subunit contains a 16S rRNA (16S mt-rRNA), a copy of mitochondrial valine transfer RNA (mt-tRNA(Val)), which plays an integral structural role, and 52 different proteins.

Its subcellular location is the mitochondrion. The sequence is that of Small ribosomal subunit protein mS25 (MRPS25) from Homo sapiens (Human).